We begin with the raw amino-acid sequence, 205 residues long: MSYAYRFKYIIIGDTGVGKSCLLLKFTDKRFQAVHDLTIGVEFGAKTITIDNKPIKLQIWDTAGQESFRSVTRSYYRGRAGTLLVYDITRRETFNHLASWLEEARQHASENMTTMLIGNKCDLEDKRTVSTEEGEQFAREHGLIFMEASAKTAHNVEEAFVETAATIYKRIQDGVVDEANEPGITPGPFGGKDASSSQQRRGCCG.

13-20 is a GTP binding site; the sequence is GDTGVGKS. The short motif at 35 to 43 is the Effector region element; the sequence is HDLTIGVEF. GTP contacts are provided by residues 61–65, 119–122, and 149–150; these read DTAGQ, NKCD, and SA. The tract at residues 179–205 is disordered; sequence ANEPGITPGPFGGKDASSSQQRRGCCG. A compositionally biased stretch (polar residues) spans 194–205; sequence ASSSQQRRGCCG. S-geranylgeranyl cysteine attachment occurs at residues cysteine 203 and cysteine 204.

Belongs to the small GTPase superfamily. Rab family.

Its subcellular location is the cell membrane. Intracellular vesicle trafficking and protein transport. This chain is Ras-related protein RABB1a (RABB1A), found in Arabidopsis thaliana (Mouse-ear cress).